Reading from the N-terminus, the 398-residue chain is Proteasome-activating nucleotidase (398 aa).

The stretch at D3–S60 forms a coiled coil. ATP contacts are provided by residues G185 to L190 and H324. Residues M396 to V398 are docks into pockets in the proteasome alpha-ring to cause gate opening.

The protein belongs to the AAA ATPase family. In terms of assembly, homohexamer. The hexameric complex has a two-ring architecture resembling a top hat that caps the 20S proteasome core at one or both ends. Upon ATP-binding, the C-terminus of PAN interacts with the alpha-rings of the proteasome core by binding to the intersubunit pockets.

Its subcellular location is the cytoplasm. Functionally, ATPase which is responsible for recognizing, binding, unfolding and translocation of substrate proteins into the archaeal 20S proteasome core particle. Is essential for opening the gate of the 20S proteasome via an interaction with its C-terminus, thereby allowing substrate entry and access to the site of proteolysis. Thus, the C-termini of the proteasomal ATPase function like a 'key in a lock' to induce gate opening and therefore regulate proteolysis. Unfolding activity requires energy from ATP hydrolysis, whereas ATP binding alone promotes ATPase-20S proteasome association which triggers gate opening, and supports translocation of unfolded substrates. The protein is Proteasome-activating nucleotidase of Archaeoglobus fulgidus (strain ATCC 49558 / DSM 4304 / JCM 9628 / NBRC 100126 / VC-16).